Reading from the N-terminus, the 949-residue chain is MAM domain-containing glycosylphosphatidylinositol anchor protein 1 (949 aa).

The N-terminal stretch at 1-18 (MEMICVLFLSLVPAYSRG) is a signal peptide. Ig-like domains follow at residues 24-125 (PAQA…IRVD) and 132-230 (PVLT…KSIT). 2 N-linked (GlcNAc...) asparagine glycosylation sites follow: N42 and N90. 2 disulfides stabilise this stretch: C60/C108 and C157/C214. N-linked (GlcNAc...) asparagine glycosylation is found at N235, N247, N257, N292, N307, and N331. The Ig-like 3 domain occupies 240–323 (PALKLSVNET…VGNPAKKTVN (84 aa)). A disulfide bridge links C262 with C308. Ig-like domains lie at 338–432 (PDVI…VEVN), 440–531 (PTIS…ALVQ), and 537–625 (PPVV…FQVS). C357 and C415 are joined by a disulfide. N432 carries an N-linked (GlcNAc...) asparagine glycan. Cystine bridges form between C463/C513 and C559/C609. N-linked (GlcNAc...) asparagine glycans are attached at residues N577, N649, and N820. The region spanning 637–737 (TPNPTLSQKQ…ARIIRYMEPI (101 aa)) is the Fibronectin type-III domain. One can recognise an MAM domain in the interval 745 to 912 (NTCRFEDEKI…VTLKKGDCPR (168 aa)). S926 carries GPI-anchor amidated serine lipidation. Residues 927–949 (GVSAQHGPCLCGPLTFFLYVLLR) constitute a propeptide, removed in mature form.

Interacts heterophilically through its MAM domain with proteins in axon-rich regions and through its Ig-like domains with proteins in differentiating muscle. In the embryonic brachial spinal cord, selectively expressed by medial lateral motor column neurons, some populations of dorsal root ganglion neurons, and interneurons.

The protein localises to the cell membrane. Functionally, required for radial migration of cortical neurons in the superficial layer of the neocortex. This chain is MAM domain-containing glycosylphosphatidylinositol anchor protein 1, found in Gallus gallus (Chicken).